We begin with the raw amino-acid sequence, 559 residues long: Phosphatase and actin regulator 3 (559 aa).

The disordered stretch occupies residues Met1–Asn65. Polar residues predominate over residues Gly15–Leu24. The span at Thr25 to Ala35 shows a compositional bias: low complexity. Thr70 carries the post-translational modification Phosphothreonine. Residues Lys82–Ala342 form a disordered region. The stretch at Ser93–Glu118 is one RPEL 1 repeat. Over residues Leu95–Leu113 the composition is skewed to basic and acidic residues. The segment covering Ser134–Asp151 has biased composition (polar residues). Over residues Pro229–Lys240 the composition is skewed to pro residues. Ser230 carries the phosphoserine modification. The residue at position 236 (Thr236) is a Phosphothreonine. Composition is skewed to polar residues over residues Asn248–Lys262 and Gly270–Leu281. Positions Val293–Ala342 are enriched in basic and acidic residues. Positions Asp346–Asn369 form a coiled coil. 3 RPEL repeats span residues Glu401–Thr426, Met439–Asn464, and Gln477–Ser502. Positions Glu438–Asp518 are required for PP1CA binding and inhibition of PP1 activity. Residues Ala450–Arg486 are a coiled coil.

Belongs to the phosphatase and actin regulator family. As to quaternary structure, binds actin and PPP1CA; thus inhibiting the protein phosphatase 1 (PP1) activity. As to expression, abundantly expressed in brain. Also found in several tumors such as lung carcinomas, nervous tumors and HL-60 leukemia cells. Isoform 3 is the major form in U-937, GOTO and HL-60 leukemia cells.

It is found in the nucleus matrix. This Homo sapiens (Human) protein is Phosphatase and actin regulator 3 (PHACTR3).